The chain runs to 113 residues: Probable 4-amino-4-deoxy-L-arabinose-phosphoundecaprenol flippase subunit ArnE (113 aa).

A run of 3 helical transmembrane segments spans residues 40 to 60 (FGWL…WLLV), 64 to 84 (LPLG…TLLA), and 92 to 112 (VDRH…LMQG).

Belongs to the ArnE family. In terms of assembly, heterodimer of ArnE and ArnF.

Its subcellular location is the cell inner membrane. It functions in the pathway bacterial outer membrane biogenesis; lipopolysaccharide biosynthesis. Its function is as follows. Translocates 4-amino-4-deoxy-L-arabinose-phosphoundecaprenol (alpha-L-Ara4N-phosphoundecaprenol) from the cytoplasmic to the periplasmic side of the inner membrane. This Pectobacterium atrosepticum (strain SCRI 1043 / ATCC BAA-672) (Erwinia carotovora subsp. atroseptica) protein is Probable 4-amino-4-deoxy-L-arabinose-phosphoundecaprenol flippase subunit ArnE.